The primary structure comprises 366 residues: Ribosomal RNA large subunit methyltransferase M (366 aa).

Residues Ser188, Cys221 to Gly224, Asp240, Asp260, and Asp277 contribute to the S-adenosyl-L-methionine site. The active-site Proton acceptor is the Lys306.

The protein belongs to the class I-like SAM-binding methyltransferase superfamily. RNA methyltransferase RlmE family. RlmM subfamily. Monomer.

Its subcellular location is the cytoplasm. It catalyses the reaction cytidine(2498) in 23S rRNA + S-adenosyl-L-methionine = 2'-O-methylcytidine(2498) in 23S rRNA + S-adenosyl-L-homocysteine + H(+). Functionally, catalyzes the 2'-O-methylation at nucleotide C2498 in 23S rRNA. This chain is Ribosomal RNA large subunit methyltransferase M, found in Salmonella dublin (strain CT_02021853).